A 107-amino-acid polypeptide reads, in one-letter code: uncharacterized protein (107 aa).

The tract at residues 86-107 (QVSNHEEDADVLETQDDNAEQV) is disordered. Over residues 92 to 107 (EDADVLETQDDNAEQV) the composition is skewed to acidic residues.

This is an uncharacterized protein from Rickettsia prowazekii (strain Madrid E).